The primary structure comprises 279 residues: Probable flavonol synthase 4 (279 aa).

Residues 1–25 (MEVERDQHKPPLSLQNNKIPSSQNF) form a disordered region. A compositionally biased stretch (polar residues) spans 13–25 (SLQNNKIPSSQNF). The Fe2OG dioxygenase domain occupies 156–256 (GAGYLMKINY…RMSSVVHIKP (101 aa)). 164–166 (NYY) contacts 2-oxoglutarate. Positions 181, 183, and 237 each coordinate Fe cation. 247–249 (RMS) serves as a coordination point for 2-oxoglutarate.

Belongs to the iron/ascorbate-dependent oxidoreductase family. Requires Fe(2+) as cofactor.

It catalyses the reaction a (2R,3R)-dihydroflavonol + 2-oxoglutarate + O2 = a flavonol + succinate + CO2 + H2O. It participates in secondary metabolite biosynthesis; flavonoid biosynthesis. This chain is Probable flavonol synthase 4 (FLS4), found in Arabidopsis thaliana (Mouse-ear cress).